The chain runs to 300 residues: Platelet-derived growth factor D (300 aa).

The region spanning 1 to 114 (QVTGNGHVQS…PGFKIYYSFV (114 aa)) is the CUB domain. Cys53 and Cys75 form a disulfide bridge. N-linked (GlcNAc...) asparagine glycosylation occurs at Asn220.

The protein belongs to the PDGF/VEGF growth factor family. As to quaternary structure, homodimer; disulfide-linked. Interacts with PDGFRB homodimers, and with heterodimers formed by PDGFRA and PDGFRB. In terms of processing, activated by proteolytic cleavage. Proteolytic removal of the N-terminal CUB domain releasing the core domain is necessary for unmasking the receptor-binding epitopes of the core domain. Cleavage after Arg-191 or Arg-193 by urokinase plasminogen activator gives rise to the active form.

The protein localises to the secreted. Its function is as follows. Growth factor that plays an essential role in the regulation of embryonic development, cell proliferation, cell migration, survival and chemotaxis. Potent mitogen for cells of mesenchymal origin. Plays an important role in wound healing. Induces macrophage recruitment, increased interstitial pressure, and blood vessel maturation during angiogenesis. Can initiate events that lead to a mesangial proliferative glomerulonephritis, including influx of monocytes and macrophages and production of extracellular matrix. This Oryctolagus cuniculus (Rabbit) protein is Platelet-derived growth factor D (PDGFD).